We begin with the raw amino-acid sequence, 335 residues long: Serine protease 42 (335 aa).

Positions 1–24 (MASGGGSLGLIVFLLLLQPKPCEA) are cleaved as a signal peptide. A glycan (N-linked (GlcNAc...) asparagine) is linked at N67. The 237-residue stretch at 79 to 315 (IMGGVDAEEG…YSKWLIAVVN (237 aa)) folds into the Peptidase S1 domain. C104 and C120 form a disulfide bridge. Residue H119 is the Charge relay system of the active site. N-linked (GlcNAc...) asparagine glycosylation is present at N140. D165 serves as the catalytic Charge relay system. An N-linked (GlcNAc...) asparagine glycan is attached at N176. Intrachain disulfides connect C199–C273, C232–C253, and C263–C291. S267 functions as the Charge relay system in the catalytic mechanism.

It belongs to the peptidase S1 family. As to expression, testis-specific. Mainly detected in round spermatids at all the eminiferous epithelial stages (at protein level).

It is found in the cytoplasm. The protein resides in the cell membrane. Its function is as follows. Plays a role in spermatogenesis. Involved in germ cell survival during meiosis. Lacks protease activity in vitro. This chain is Serine protease 42, found in Mus musculus (Mouse).